Consider the following 1121-residue polypeptide: PR domain zinc finger protein 10 (1121 aa).

Disordered stretches follow at residues 1-24 and 92-125; these read MEAK…NTPQ and TEAS…MDDW. Residues 106–124 show a composition bias toward acidic residues; sequence VDSEDEEEDNDSEDSEMDD. The SET domain occupies 173–290; sequence LPLVLYIDRF…PKQELKVWYA (118 aa). The tract at residues 192 to 295 is N-terminal PR domain; essential for transcriptional activation; the sequence is IPKRTQFGPL…KVWYAASYAE (104 aa). Residues 319–341 form a C2H2-type 1 zinc finger; the sequence is WPCYECNRRFMSSEQLQQHLNMH. Disordered stretches follow at residues 350–387 and 419–473; these read RPKS…SADK and ESME…PHLT. Residues 351–374 are compositionally biased toward basic residues; that stretch reads PKSRGRGRGRKRFGGARRPGRRTK. 9 C2H2-type zinc fingers span residues 500-522, 529-551, 557-579, 585-608, 613-635, 641-664, 696-719, 741-764, and 803-826; these read FKCP…MRFH, HVCH…LVLH, YSCL…VGIH, FLCP…RSFH, FQCS…MLRH, FLCS…QRMH, FKCR…SKRH, YYCQ…LKNH, and VCCP…RKKH. The interval 871-1101 is C-terminal glutamine-rich region; essential for transcriptional activation; the sequence is QAMTELSQTL…PAGGQQATTQ (231 aa). A disordered region spans residues 1077 to 1097; it reads VPSTATQGHPDPLEQPAGGQQ.

The protein belongs to the class V-like SAM-binding methyltransferase superfamily.

The protein localises to the nucleus. In terms of biological role, transcriptional activator, essential for early embryonic development and survival of embryonic stem cells (ESCs). Supports cell growth and survival during early development by transcriptionally activating the expression of the translation initiation factor EIF3B, to sustain global translation. Activates the transcription of FLNC. In Danio rerio (Zebrafish), this protein is PR domain zinc finger protein 10 (prdm10).